We begin with the raw amino-acid sequence, 595 residues long: Methionine--tRNA ligase (595 aa).

A 'HIGH' region motif is present at residues 11 to 21; it reads PYANGPRHIGH. The Zn(2+) site is built by cysteine 143, cysteine 146, cysteine 156, and cysteine 159. Residues 350–354 carry the 'KMSKS' region motif; the sequence is KFSSS. Residue serine 353 participates in ATP binding.

Belongs to the class-I aminoacyl-tRNA synthetase family. MetG type 1 subfamily. Monomer. It depends on Zn(2+) as a cofactor.

It is found in the cytoplasm. It catalyses the reaction tRNA(Met) + L-methionine + ATP = L-methionyl-tRNA(Met) + AMP + diphosphate. Functionally, is required not only for elongation of protein synthesis but also for the initiation of all mRNA translation through initiator tRNA(fMet) aminoacylation. This Nocardioides sp. (strain ATCC BAA-499 / JS614) protein is Methionine--tRNA ligase.